A 134-amino-acid polypeptide reads, in one-letter code: Syncollin (134 aa).

The signal sequence occupies residues 1 to 21 (MSPLCLLLLALALVAVPGARG).

As to quaternary structure, monomer and homooligomer; most probably hexameric. Interacts with GP2. According to PubMed:10753942 interaction with syntaxins shown in PubMed:9244306 is physiologically questionable. In terms of processing, contains intrachain disulfide bonds. As to expression, specifically expressed in pancreas and also detected in secretory granules of parotid gland (at protein level). Expressed in pancreas, spleen, small intestine, lung and neutrophilic granulocytes (at protein level). Expressed by epithelial cells in duodenum and colon.

The protein resides in the zymogen granule membrane. It localises to the zymogen granule lumen. Its function is as follows. Functions in exocytosis in pancreatic acinar cells regulating the fusion of zymogen granules with each other. May have a pore-forming activity on membranes and regulate exocytosis in other exocrine tissues. The polypeptide is Syncollin (Sycn) (Rattus norvegicus (Rat)).